The primary structure comprises 965 residues: Argonaute protein wago-4 (965 aa).

Positions 1-34 (MPALPPVYTPSGAPSSVHAPPAVPPVPVPTQPLR) are disordered. Positions 10 to 20 (PSGAPSSVHAP) are enriched in low complexity. Positions 21–30 (PAVPPVPVPT) are enriched in pro residues. The region spanning 318–428 (PILDKLKEIT…YPMELLKISS (111 aa)) is the PAZ domain. Residues 594–924 (TFVFIITDDS…YAKRGRNLWN (331 aa)) form the Piwi domain.

It belongs to the argonaute family. WAGO subfamily. In terms of assembly, interacts with znfx-1; the interaction promotes the transmission of epigenetic information across generations. May interact with mina-1. Expressed in the hermaphrodite germline and in oocytes. Expressed at a low level in the male germline. Not expressed in the soma of hermaphrodites or males.

It localises to the cytoplasm. It is found in the perinuclear region. The protein localises to the cytoplasmic granule. In terms of biological role, argonaute protein which is involved in the endogenous small interfering RNA (endo-siRNA) pathway and is required for RNA-mediated gene silencing (RNAi) in the germline. Interacts with secondary 22G-RNAs, which are RNA-dependent RNA polymerase-derived endo-siRNAs, typically 22 nucleotides in length with a 5'guanosine residue. Also interacts with the mRNA targets of 22G-RNAs. Associates with znfx-1 to mediate small RNA-directed transgenerational epigenetic inheritance of both germline- and soma-expressed genes. The protein is Argonaute protein wago-4 of Caenorhabditis elegans.